An 855-amino-acid polypeptide reads, in one-letter code: Valine--tRNA ligase (855 aa).

The short motif at 42–52 is the 'HIGH' region element; it reads PTISGKLHIGH. The 'KMSKS' region motif lies at 574 to 578; sequence KMSKS. Lys577 is a binding site for ATP.

It belongs to the class-I aminoacyl-tRNA synthetase family. ValS type 2 subfamily. Monomer.

The protein resides in the cytoplasm. The enzyme catalyses tRNA(Val) + L-valine + ATP = L-valyl-tRNA(Val) + AMP + diphosphate. In terms of biological role, catalyzes the attachment of valine to tRNA(Val). As ValRS can inadvertently accommodate and process structurally similar amino acids such as threonine, to avoid such errors, it has a 'posttransfer' editing activity that hydrolyzes mischarged Thr-tRNA(Val) in a tRNA-dependent manner. This chain is Valine--tRNA ligase, found in Wolbachia sp. subsp. Brugia malayi (strain TRS).